A 68-amino-acid polypeptide reads, in one-letter code: Protein transport protein Sec61 subunit gamma (68 aa).

Residues Met-1–Glu-32 lie on the Cytoplasmic side of the membrane. A helical transmembrane segment spans residues Tyr-33 to Ile-61. At Asn-62–Ala-68 the chain is on the extracellular side.

It belongs to the SecE/SEC61-gamma family. As to quaternary structure, heterotrimeric complex composed of SEC61-alpha, SEC61-beta and SEC61-gamma. In terms of tissue distribution, expressed in the germline. Expression in the germline is regulated in a sex- and meiotic cycle stage-specific manner. Expressed in somatic tissues including the intestine and somatic gonad. Expressed in the intestine more highly in hermaprodites than in males. In hermaphrodites, weakly expressed in the spermatheca.

Its subcellular location is the endoplasmic reticulum membrane. In terms of biological role, required for oocyte development and ovulation. Required for the translocation of secretory and transmembrane proteins into the endoplasmic reticulum in vitro. The chain is Protein transport protein Sec61 subunit gamma from Caenorhabditis elegans.